We begin with the raw amino-acid sequence, 419 residues long: UDP-N-acetylglucosamine 1-carboxyvinyltransferase 2 (419 aa).

Lysine 22 to asparagine 23 is a binding site for phosphoenolpyruvate. Arginine 92 provides a ligand contact to UDP-N-acetyl-alpha-D-glucosamine. The active-site Proton donor is the cysteine 116. A 2-(S-cysteinyl)pyruvic acid O-phosphothioketal modification is found at cysteine 116. UDP-N-acetyl-alpha-D-glucosamine is bound by residues arginine 121–leucine 125, aspartate 306, and isoleucine 328.

This sequence belongs to the EPSP synthase family. MurA subfamily.

It is found in the cytoplasm. The catalysed reaction is phosphoenolpyruvate + UDP-N-acetyl-alpha-D-glucosamine = UDP-N-acetyl-3-O-(1-carboxyvinyl)-alpha-D-glucosamine + phosphate. It functions in the pathway cell wall biogenesis; peptidoglycan biosynthesis. Cell wall formation. Adds enolpyruvyl to UDP-N-acetylglucosamine. The sequence is that of UDP-N-acetylglucosamine 1-carboxyvinyltransferase 2 from Streptococcus pyogenes serotype M18 (strain MGAS8232).